The following is a 479-amino-acid chain: MNYLNENIDSLNKKLQDGEITAEDLAKETVKNIKETDKKINAWITVDEEAKPAENLDFNKNKLAGIPIAIKDNIITNGMKTTAASHILYNYMPVYDATVISKLKKAQATFVGKTNMDEFAMGSSTEHSYYGETHNPWNLDKVPGGSSGGSAAAVASGEVVAALGSDTGGSIRQPAAFNGIFGIKPTYGRVSRWGLIAFGSSLDQIGVMSKRVKDSAEVLNVIAGPDEHDATVSEQEVPDYTSFLGQDVKGLRVAVPKEYMDAVDGEMREVIQKQIDVLKDAGAIINEVSLPHTKYVVPTYYIVASSEASSNLQRYDGIRYGYRAKDTKNLLDVYVKSRSEGFGDEVKRRIMLGSFALSAGAYDEFFKKAAQVRTLICRDFEKIFEENDVIVGPTTTEPAFGIGEEISDPIKMYNNDLLTISANLAGIPAASVPAGLVDGMPAGLQIMAKRFDEGNVFKVADFIERNNKFYEKTPTGMED.

Catalysis depends on charge relay system residues lysine 71 and serine 146. Residue serine 170 is the Acyl-ester intermediate of the active site.

This sequence belongs to the amidase family. GatA subfamily. In terms of assembly, heterotrimer of A, B and C subunits.

It carries out the reaction L-glutamyl-tRNA(Gln) + L-glutamine + ATP + H2O = L-glutaminyl-tRNA(Gln) + L-glutamate + ADP + phosphate + H(+). Its function is as follows. Allows the formation of correctly charged Gln-tRNA(Gln) through the transamidation of misacylated Glu-tRNA(Gln) in organisms which lack glutaminyl-tRNA synthetase. The reaction takes place in the presence of glutamine and ATP through an activated gamma-phospho-Glu-tRNA(Gln). This chain is Glutamyl-tRNA(Gln) amidotransferase subunit A, found in Lactobacillus johnsonii (strain CNCM I-12250 / La1 / NCC 533).